The chain runs to 107 residues: Heme-degrading monooxygenase (107 aa).

The region spanning 2–94 (IIVTNTAKIT…YILDNKITYY (93 aa)) is the ABM domain. Position 6 (asparagine 6) interacts with Fe cation. Residue histidine 76 participates in heme binding.

This sequence belongs to the antibiotic biosynthesis monooxygenase family. Heme-degrading monooxygenase IsdG subfamily. As to quaternary structure, homodimer.

Its subcellular location is the cytoplasm. It catalyses the reaction heme b + 3 reduced [NADPH--hemoprotein reductase] + 3 O2 = biliverdin IXalpha + CO + Fe(2+) + 3 oxidized [NADPH--hemoprotein reductase] + 3 H2O + H(+). Functionally, allows bacterial pathogens to use the host heme as an iron source. Catalyzes the oxidative degradation of the heme macrocyclic porphyrin ring to the biliverdin in the presence of a suitable electron donor such as ascorbate or NADPH--cytochrome P450 reductase, with subsequent release of free iron. The chain is Heme-degrading monooxygenase from Bacillus thuringiensis subsp. konkukian (strain 97-27).